Here is a 99-residue protein sequence, read N- to C-terminus: Carboxysome shell vertex protein CcmL (99 aa).

The BMV domain occupies 1 to 83 (MRIAKVRGTV…VDAAVIAIID (83 aa)).

It belongs to the CcmL/EutN family. CcmL subfamily. As to quaternary structure, homopentamer. Interacts with full-length CcmM.

Its subcellular location is the carboxysome. Probably forms vertices in the carboxysome, a polyhedral inclusion where RuBisCO (ribulose bisphosphate carboxylase, rbcL-rbcS) is sequestered. Has been modeled to induce curvature upon insertion into an otherwise flat hexagonal molecular layer of CcmK subunits. Functionally, beta-carboxysome assembly initiates when soluble RuBisCO is condensed into a liquid matrix in a pre-carboxysome by the RbcS-like domains of probably both CcmM58 and CcmM35. CcmN interacts with the N-terminus of CcmM58, and then recruits the CcmK2 major shell protein via CcmN's encapsulation peptide. Shell formation requires CcmK proteins and CcmO. CcmL caps the otherwise elongated carboxysome. Once fully encapsulated carboxysomes are formed, they migrate within the cell probably via interactions with the cytoskeleton. The sequence is that of Carboxysome shell vertex protein CcmL from Synechococcus elongatus (strain ATCC 33912 / PCC 7942 / FACHB-805) (Anacystis nidulans R2).